A 297-amino-acid chain; its full sequence is Ribosomal RNA small subunit methyltransferase H (297 aa).

Residues 36–38, Asp-56, Leu-90, Asp-104, and His-111 contribute to the S-adenosyl-L-methionine site; that span reads GGH.

Belongs to the methyltransferase superfamily. RsmH family.

It is found in the cytoplasm. It catalyses the reaction cytidine(1402) in 16S rRNA + S-adenosyl-L-methionine = N(4)-methylcytidine(1402) in 16S rRNA + S-adenosyl-L-homocysteine + H(+). Functionally, specifically methylates the N4 position of cytidine in position 1402 (C1402) of 16S rRNA. This is Ribosomal RNA small subunit methyltransferase H from Dictyoglomus thermophilum (strain ATCC 35947 / DSM 3960 / H-6-12).